We begin with the raw amino-acid sequence, 191 residues long: Adenylate kinase (191 aa).

ATP is bound at residue 11 to 16; the sequence is GAGKGT. The NMP stretch occupies residues 31–60; that stretch reads STGDILRSNVAERSPLGIKAKDYMDKGDLV. AMP is bound by residues T32, R37, 58 to 60, 86 to 89, and Q93; these read DLV and GFPR. The segment at 132–138 is LID; the sequence is SRKREDD. An ATP-binding site is contributed by R133. AMP contacts are provided by R135 and R146. ATP is bound at residue N174.

It belongs to the adenylate kinase family. As to quaternary structure, monomer.

The protein localises to the cytoplasm. It carries out the reaction AMP + ATP = 2 ADP. It functions in the pathway purine metabolism; AMP biosynthesis via salvage pathway; AMP from ADP: step 1/1. In terms of biological role, catalyzes the reversible transfer of the terminal phosphate group between ATP and AMP. Plays an important role in cellular energy homeostasis and in adenine nucleotide metabolism. The chain is Adenylate kinase from Trichodesmium erythraeum (strain IMS101).